Reading from the N-terminus, the 379-residue chain is Beta sliding clamp (379 aa).

Belongs to the beta sliding clamp family. Forms a ring-shaped head-to-tail homodimer around DNA which binds and tethers DNA polymerases and other proteins to the DNA. The DNA replisome complex has a single clamp-loading complex (3 tau and 1 each of delta, delta', psi and chi subunits) which binds 3 Pol III cores (1 core on the leading strand and 2 on the lagging strand) each with a beta sliding clamp dimer. Additional proteins in the replisome are other copies of gamma, psi and chi, Ssb, DNA helicase and RNA primase.

Its subcellular location is the cytoplasm. Its function is as follows. Confers DNA tethering and processivity to DNA polymerases and other proteins. Acts as a clamp, forming a ring around DNA (a reaction catalyzed by the clamp-loading complex) which diffuses in an ATP-independent manner freely and bidirectionally along dsDNA. Initially characterized for its ability to contact the catalytic subunit of DNA polymerase III (Pol III), a complex, multichain enzyme responsible for most of the replicative synthesis in bacteria; Pol III exhibits 3'-5' exonuclease proofreading activity. The beta chain is required for initiation of replication as well as for processivity of DNA replication. The chain is Beta sliding clamp (dnaN) from Rickettsia felis (strain ATCC VR-1525 / URRWXCal2) (Rickettsia azadi).